The primary structure comprises 251 residues: Hydroxyacylglutathione hydrolase GloB (251 aa).

6 residues coordinate Zn(2+): H53, H55, D57, H58, H110, and D127. Substrate-binding positions include 136–138 (RLF), 165–167 (HEY), and 245–248 (RSKK). Residue H165 coordinates Zn(2+).

Belongs to the metallo-beta-lactamase superfamily. Glyoxalase II family. In terms of assembly, monomer. Zn(2+) is required as a cofactor.

It catalyses the reaction an S-(2-hydroxyacyl)glutathione + H2O = a 2-hydroxy carboxylate + glutathione + H(+). The enzyme catalyses (R)-S-lactoylglutathione + H2O = (R)-lactate + glutathione + H(+). It participates in secondary metabolite metabolism; methylglyoxal degradation; (R)-lactate from methylglyoxal: step 2/2. With respect to regulation, is inhibited by Cu(2+). Its function is as follows. Type II glyoxalase that catalyzes the hydrolysis of (R)-S-lactoylglutathione to (R)-lactate and glutathione. Is more efficient than the isozyme GloC, and plays a major contribution to methylglyoxal (MG) detoxification in E.coli. The two isoenzymes have additive effects and ensure maximal MG degradation. The sequence is that of Hydroxyacylglutathione hydrolase GloB from Escherichia coli (strain K12).